A 336-amino-acid polypeptide reads, in one-letter code: DNA-directed RNA polymerase subunit alpha (336 aa).

Residues 1-232 are alpha N-terminal domain (alpha-NTD); it reads MIQKNWQELI…DQLSVFVNFD (232 aa). Positions 248-336 are alpha C-terminal domain (alpha-CTD); it reads FNPALLKKVD…DLAKRYEDQY (89 aa).

This sequence belongs to the RNA polymerase alpha chain family. Homodimer. The RNAP catalytic core consists of 2 alpha, 1 beta, 1 beta' and 1 omega subunit. When a sigma factor is associated with the core the holoenzyme is formed, which can initiate transcription.

The enzyme catalyses RNA(n) + a ribonucleoside 5'-triphosphate = RNA(n+1) + diphosphate. Functionally, DNA-dependent RNA polymerase catalyzes the transcription of DNA into RNA using the four ribonucleoside triphosphates as substrates. This Sinorhizobium medicae (strain WSM419) (Ensifer medicae) protein is DNA-directed RNA polymerase subunit alpha.